The primary structure comprises 162 residues: Fibroblast growth factor 22 (162 aa).

A signal peptide spans 1 to 22; that stretch reads MRSRLWLGLAWLLLARAPGAPG.

Belongs to the heparin-binding growth factors family. As to quaternary structure, interacts with FGFR1 and FGFR2. Interacts with FGFBP1. As to expression, preferentially expressed in skin; low expression in brain. Expressed in the inner root sheath of the hair follicle.

It is found in the secreted. In terms of biological role, plays a role in the fasting response, glucose homeostasis, lipolysis and lipogenesis. Can stimulate cell proliferation (in vitro). May be involved in hair development. This Mus musculus (Mouse) protein is Fibroblast growth factor 22 (Fgf22).